Here is a 760-residue protein sequence, read N- to C-terminus: MNWRFVELLYFLFVWGRISVQPSRQEPAGTDQHVSKEFDWLISDRGPFHHSRSYLSFVERHRQGFTTRYKIYREFARWKVRNTAIERRDLVRHPVPLMPEFQRSIRLLGRRPTTQQFIDTIIKKYGTHLLISATLGGEEALTMYMDKSRLDRKSGNATQSVEALHQLASSYFVDRDGTMRRLHEIQISTGAIKVTETRTGPLGCNSYDNLDSVSSVLLQSTESKLHLQGLQIIFPQYLQEKFVQSALSYIMCNGEGEYVCQNSQCRCQCAEEFPQCNCPITDIQIMEFTLANMAKAWTEAYKDLENSDEFKSFMKRLPSNHFLTIGSIHQHWGNDWDLQSRYKLLQSATEAQRQKIQRTARKLFGLSVRCRHNPNHQLPRERTIQQWLARVQSLLYCNENGFWGTFLESQRSCVCHGSTTLCQRPIPCIIGGNNSCAMCSLANISLCGSCNKGYKLYRGRCEPQNVDSERSEQFISFETDLDFQDLELKYLLQKMDSRLYVHTTFISNEIRLDTFFDPRWRKRMSLTLKSNKNRMDFIHMVIGMSMRICQMRNSSLDPMFFVYVNPFSGSHSEGWNMPFGEFGYPRWEKIRLQNSQCYNWTLLLGNRWKTFFETVHIYLRSRTRLPTLRNETGQGPVDLSDPSKRQFYIKISDVQVFGYSLRFNADLLRSAVQQVNQSYTQGGQFYSSSSVMLLMLDIRDRINRLAPPVAPGKPQLDLFSCMLKHRLKLTNSEIIRVNHALDLYNTEILKQSDQMTAKLC.

Residues 1-16 (MNWRFVELLYFLFVWG) form the signal peptide. An MACPF domain is found at 68-251 (RYKIYREFAR…FVQSALSYIM (184 aa)). Residues Asn156, Asn433, Asn443, Asn553, Asn599, Asn630, and Asn676 are each glycosylated (N-linked (GlcNAc...) asparagine).

This sequence belongs to the BRINP family. In terms of tissue distribution, expressed in brain. Expressed in GABAergic neurons of the pre-frontal cortex. Weakly expressed in embryonic stem (ES) cells and in ES-derived neural stem cells (NSCs).

The protein resides in the cytoplasm. Plays a role in neurogenesis, brain development, and the functioning of GABAergic neurons. May suppress cell cycle progression in postmitotic neurons by inhibiting G1/S transition. This Mus musculus (Mouse) protein is BMP/retinoic acid-inducible neural-specific protein 1 (Brinp1).